The chain runs to 309 residues: NAD-dependent protein deacylase sirtuin-5B, mitochondrial (309 aa).

The N-terminal 35 residues, 1–35 (MILLPFHTRRLVSHVYCGLKPASQNKGIALEMTRP), are a transit peptide targeting the mitochondrion. Residues 36-306 (SSNLANFREA…PPALARHETE (271 aa)) enclose the Deacetylase sirtuin-type domain. 57–76 (GAGVSAESGVPTIIGAGGYW) lines the NAD(+) pocket. Substrate is bound by residues Tyr101 and Arg104. 139 to 142 (QNID) contacts NAD(+). The active-site Proton acceptor is His157. Zn(2+)-binding residues include Cys165, Cys168, Cys206, and Cys211. NAD(+) contacts are provided by residues 248 to 250 (GTS), 274 to 276 (NME), and Cys292.

The protein belongs to the sirtuin family. Class III subfamily. It depends on Zn(2+) as a cofactor.

It localises to the mitochondrion. It is found in the cytoplasm. The protein localises to the cytosol. The protein resides in the nucleus. It catalyses the reaction N(6)-malonyl-L-lysyl-[protein] + NAD(+) + H2O = 2''-O-malonyl-ADP-D-ribose + nicotinamide + L-lysyl-[protein]. It carries out the reaction N(6)-succinyl-L-lysyl-[protein] + NAD(+) + H2O = 2''-O-succinyl-ADP-D-ribose + nicotinamide + L-lysyl-[protein]. The enzyme catalyses N(6)-glutaryl-L-lysyl-[protein] + NAD(+) + H2O = 2''-O-glutaryl-ADP-D-ribose + nicotinamide + L-lysyl-[protein]. Its function is as follows. NAD-dependent lysine demalonylase, desuccinylase and deglutarylase that specifically removes malonyl, succinyl and glutaryl groups on target proteins. Has weak NAD-dependent protein deacetylase activity; however this activity may not be physiologically relevant in vivo. This is NAD-dependent protein deacylase sirtuin-5B, mitochondrial (sirt5-b) from Xenopus laevis (African clawed frog).